A 279-amino-acid chain; its full sequence is 3-methyl-2-oxobutanoate hydroxymethyltransferase (279 aa).

The Mg(2+) site is built by Asp-43 and Asp-82. 3-methyl-2-oxobutanoate contacts are provided by residues 43–44, Asp-82, and Lys-112; that span reads DS. Glu-114 provides a ligand contact to Mg(2+). Residue Glu-181 is the Proton acceptor of the active site.

The protein belongs to the PanB family. As to quaternary structure, homodecamer; pentamer of dimers. It depends on Mg(2+) as a cofactor.

The protein localises to the cytoplasm. The enzyme catalyses 3-methyl-2-oxobutanoate + (6R)-5,10-methylene-5,6,7,8-tetrahydrofolate + H2O = 2-dehydropantoate + (6S)-5,6,7,8-tetrahydrofolate. It functions in the pathway cofactor biosynthesis; (R)-pantothenate biosynthesis; (R)-pantoate from 3-methyl-2-oxobutanoate: step 1/2. Catalyzes the reversible reaction in which hydroxymethyl group from 5,10-methylenetetrahydrofolate is transferred onto alpha-ketoisovalerate to form ketopantoate. This Geobacillus sp. (strain WCH70) protein is 3-methyl-2-oxobutanoate hydroxymethyltransferase.